Reading from the N-terminus, the 337-residue chain is Putative 4-hydroxythreonine-4-phosphate dehydrogenase 2 (337 aa).

The a divalent metal cation site is built by His173, His217, and His274.

It belongs to the PdxA family. Homodimer. The cofactor is Zn(2+). It depends on Mg(2+) as a cofactor. Requires Co(2+) as cofactor.

Its subcellular location is the cytoplasm. It catalyses the reaction 4-(phosphooxy)-L-threonine + NAD(+) = 3-amino-2-oxopropyl phosphate + CO2 + NADH. It functions in the pathway cofactor biosynthesis; pyridoxine 5'-phosphate biosynthesis; pyridoxine 5'-phosphate from D-erythrose 4-phosphate: step 4/5. Functionally, catalyzes the NAD(P)-dependent oxidation of 4-(phosphooxy)-L-threonine (HTP) into 2-amino-3-oxo-4-(phosphooxy)butyric acid which spontaneously decarboxylates to form 3-amino-2-oxopropyl phosphate (AHAP). The protein is Putative 4-hydroxythreonine-4-phosphate dehydrogenase 2 of Pseudomonas aeruginosa (strain ATCC 15692 / DSM 22644 / CIP 104116 / JCM 14847 / LMG 12228 / 1C / PRS 101 / PAO1).